Consider the following 460-residue polypeptide: Argininosuccinate lyase (460 aa).

It belongs to the lyase 1 family. Argininosuccinate lyase subfamily.

It localises to the cytoplasm. It carries out the reaction 2-(N(omega)-L-arginino)succinate = fumarate + L-arginine. It participates in amino-acid biosynthesis; L-arginine biosynthesis; L-arginine from L-ornithine and carbamoyl phosphate: step 3/3. This chain is Argininosuccinate lyase, found in Limosilactobacillus fermentum (strain NBRC 3956 / LMG 18251) (Lactobacillus fermentum).